The following is a 1485-amino-acid chain: Sex-determining transformer protein 2 (1485 aa).

An N-terminal signal peptide occupies residues 1 to 28; that stretch reads MSLRSNKLLVAAVIFTVVTFGLLLTSSI. The next 9 membrane-spanning stretches (helical) occupy residues 438–458, 490–510, 584–604, 732–752, 923–943, 950–970, 980–1000, 1033–1053, and 1063–1083; these read VVYF…FFAW, IELN…NTYL, WPFI…FVDI, GILL…VMLI, LLAS…FSIT, LIFS…ISLF, DSAV…LSLF, AQVF…AGVV, and TVIL…VLVA. The tract at residues 1131–1271 is interaction with fem-3; sequence DFHIRPTNMS…MLHMIEKVQK (141 aa). Residues 1143-1175 are disordered; sequence YAPPPAKKRAKQTNNETDPEKKEDEPGTSNANN. Residues 1181–1201 traverse the membrane as a helical segment; it reads AAHRLAILPWHFVLGGIPVDL. Disordered stretches follow at residues 1228–1252, 1275–1306, and 1348–1384; these read SELE…PAPE, EKEA…PSHR, and EMPP…PPHP. The span at 1275 to 1284 shows a compositional bias: basic and acidic residues; it reads EKEAKEKVHQ. An MX regulatory domain; required for tra-1 binding region spans residues 1401 to 1422; sequence CEDVYWTYNDGRLPPNVAMPPR. The disordered stretch occupies residues 1442-1485; sequence PPGQPSIPIPAEAMALREERARAHREQEQRDNSQSPSPSPEPGL. Basic and acidic residues predominate over residues 1456 to 1472; that stretch reads ALREERARAHREQEQRD.

As to quaternary structure, interacts with tra-1 and fem-3. In terms of tissue distribution, somatic and germline tissues.

It is found in the membrane. Plays a major role in controlling sexual cell fates. Promotes female development in XX animals where it sequesters one or more of the FEM proteins to the membrane thereby freeing the tra-1 protein (a putative transcription factor) to enter the nucleus and promote female development. In XO animals it acts as a receptor for her-1 which prevents it from binding to FEM proteins thereby repressing the activity of tra-1. Negatively regulates male development when bound to fem-3 and is required together with tra-1 for promoting spermatogenesis. This chain is Sex-determining transformer protein 2, found in Caenorhabditis remanei (Caenorhabditis vulgaris).